Here is a 147-residue protein sequence, read N- to C-terminus: Transcriptional regulator MraZ (147 aa).

2 SpoVT-AbrB domains span residues 5 to 50 (AIAL…PLSA) and 79 to 122 (AQEE…SDAG).

Belongs to the MraZ family. In terms of assembly, forms oligomers.

Its subcellular location is the cytoplasm. The protein localises to the nucleoid. The protein is Transcriptional regulator MraZ of Aromatoleum aromaticum (strain DSM 19018 / LMG 30748 / EbN1) (Azoarcus sp. (strain EbN1)).